The primary structure comprises 298 residues: Bifunctional protein FolD (298 aa).

NADP(+)-binding positions include 166-168, Ser-191, and Ile-232; that span reads GRS.

It belongs to the tetrahydrofolate dehydrogenase/cyclohydrolase family. In terms of assembly, homodimer.

The catalysed reaction is (6R)-5,10-methylene-5,6,7,8-tetrahydrofolate + NADP(+) = (6R)-5,10-methenyltetrahydrofolate + NADPH. It catalyses the reaction (6R)-5,10-methenyltetrahydrofolate + H2O = (6R)-10-formyltetrahydrofolate + H(+). It functions in the pathway one-carbon metabolism; tetrahydrofolate interconversion. Its function is as follows. Catalyzes the oxidation of 5,10-methylenetetrahydrofolate to 5,10-methenyltetrahydrofolate and then the hydrolysis of 5,10-methenyltetrahydrofolate to 10-formyltetrahydrofolate. This is Bifunctional protein FolD from Maricaulis maris (strain MCS10) (Caulobacter maris).